The following is a 448-amino-acid chain: Phosphoglucosamine mutase (448 aa).

Ser99 acts as the Phosphoserine intermediate in catalysis. Mg(2+) contacts are provided by Ser99, Asp238, Asp240, and Asp242. Residue Ser99 is modified to Phosphoserine.

Belongs to the phosphohexose mutase family. The cofactor is Mg(2+). Activated by phosphorylation.

It carries out the reaction alpha-D-glucosamine 1-phosphate = D-glucosamine 6-phosphate. Catalyzes the conversion of glucosamine-6-phosphate to glucosamine-1-phosphate. The sequence is that of Phosphoglucosamine mutase from Marinomonas sp. (strain MWYL1).